The sequence spans 342 residues: Serpentine receptor class delta-33 (342 aa).

7 helical membrane passes run 26-46 (IFVITVTILTSIGFLLNLLLL), 62-82 (IFLANTTITQLVYALFAVTSM), 112-132 (YVGILHLSLNSFISLMLSMIY), 148-168 (IILCIIGYFFPFLIFASCSNI), 205-225 (LIILTLAVTCGLVPIYFVMYW), 261-281 (IIPLVSVFPASIFWCLSQLGF), and 287-307 (YSYFIIPCLSLGCIADPVVTI).

Belongs to the nematode receptor-like protein srd family.

It localises to the membrane. This chain is Serpentine receptor class delta-33 (srd-33), found in Caenorhabditis elegans.